The chain runs to 331 residues: Ketol-acid reductoisomerase (NADP(+)) (331 aa).

Residues 2–182 form the KARI N-terminal Rossmann domain; that stretch reads AKMYYDKDAD…GGTRAGVIET (181 aa). NADP(+) is bound by residues 25–28, Ser-51, Ser-53, and 83–86; these read FGSQ and DEKQ. His-108 is a catalytic residue. NADP(+) is bound at residue Gly-134. A KARI C-terminal knotted domain is found at 183-328; sequence TFKEETETDL…KGLREMMAWI (146 aa). Mg(2+)-binding residues include Asp-191, Glu-195, Glu-227, and Glu-231. Residue Ser-252 coordinates substrate.

Belongs to the ketol-acid reductoisomerase family. The cofactor is Mg(2+).

The enzyme catalyses (2R)-2,3-dihydroxy-3-methylbutanoate + NADP(+) = (2S)-2-acetolactate + NADPH + H(+). The catalysed reaction is (2R,3R)-2,3-dihydroxy-3-methylpentanoate + NADP(+) = (S)-2-ethyl-2-hydroxy-3-oxobutanoate + NADPH + H(+). Its pathway is amino-acid biosynthesis; L-isoleucine biosynthesis; L-isoleucine from 2-oxobutanoate: step 2/4. It functions in the pathway amino-acid biosynthesis; L-valine biosynthesis; L-valine from pyruvate: step 2/4. Functionally, involved in the biosynthesis of branched-chain amino acids (BCAA). Catalyzes an alkyl-migration followed by a ketol-acid reduction of (S)-2-acetolactate (S2AL) to yield (R)-2,3-dihydroxy-isovalerate. In the isomerase reaction, S2AL is rearranged via a Mg-dependent methyl migration to produce 3-hydroxy-3-methyl-2-ketobutyrate (HMKB). In the reductase reaction, this 2-ketoacid undergoes a metal-dependent reduction by NADPH to yield (R)-2,3-dihydroxy-isovalerate. This Thermoanaerobacter sp. (strain X514) protein is Ketol-acid reductoisomerase (NADP(+)).